We begin with the raw amino-acid sequence, 164 residues long: 6,7-dimethyl-8-ribityllumazine synthase (164 aa).

5-amino-6-(D-ribitylamino)uracil contacts are provided by residues tyrosine 27, 58–60 (ALE), and 87–89 (CVI). 92-93 (ET) is a (2S)-2-hydroxy-3-oxobutyl phosphate binding site. Histidine 95 acts as the Proton donor in catalysis. Asparagine 120 serves as a coordination point for 5-amino-6-(D-ribitylamino)uracil. Residue arginine 134 participates in (2S)-2-hydroxy-3-oxobutyl phosphate binding.

This sequence belongs to the DMRL synthase family.

The enzyme catalyses (2S)-2-hydroxy-3-oxobutyl phosphate + 5-amino-6-(D-ribitylamino)uracil = 6,7-dimethyl-8-(1-D-ribityl)lumazine + phosphate + 2 H2O + H(+). Its pathway is cofactor biosynthesis; riboflavin biosynthesis; riboflavin from 2-hydroxy-3-oxobutyl phosphate and 5-amino-6-(D-ribitylamino)uracil: step 1/2. Functionally, catalyzes the formation of 6,7-dimethyl-8-ribityllumazine by condensation of 5-amino-6-(D-ribitylamino)uracil with 3,4-dihydroxy-2-butanone 4-phosphate. This is the penultimate step in the biosynthesis of riboflavin. This Methylocella silvestris (strain DSM 15510 / CIP 108128 / LMG 27833 / NCIMB 13906 / BL2) protein is 6,7-dimethyl-8-ribityllumazine synthase.